The primary structure comprises 227 residues: Guanylate kinase (227 aa).

In terms of domain architecture, Guanylate kinase-like spans 21–199; it reads GNLFMVVAPS…ALAELECIVA (179 aa). Position 28–35 (28–35) interacts with ATP; the sequence is APSGAGKS.

It belongs to the guanylate kinase family.

Its subcellular location is the cytoplasm. It catalyses the reaction GMP + ATP = GDP + ADP. Its function is as follows. Essential for recycling GMP and indirectly, cGMP. In Burkholderia lata (strain ATCC 17760 / DSM 23089 / LMG 22485 / NCIMB 9086 / R18194 / 383), this protein is Guanylate kinase.